We begin with the raw amino-acid sequence, 589 residues long: Carbonic anhydrase (589 aa).

Alpha-carbonic anhydrase domains follow at residues 59-316 (HDYN…YEYK) and 321-585 (DKYN…YGYN). 258-259 (TT) contacts substrate. The interval 390–589 (MQINFGDPPA…TVYGYNGAAA (200 aa)) is catalytic. The Zn(2+) site is built by His-420, His-422, and His-440.

Belongs to the alpha-carbonic anhydrase family. Requires Zn(2+) as cofactor.

The catalysed reaction is hydrogencarbonate + H(+) = CO2 + H2O. Reversible hydration of carbon dioxide. This is Carbonic anhydrase (DCA) from Dunaliella salina (Green alga).